Consider the following 362-residue polypeptide: MKHVYNFSAGPAMMPKAVLAQAQQELLNWQQQGTSVMEVSHRSNAFMALATQTEQDLRQLYAIPDNYKVLFLQGGAHGQFAAIPMNLIGKKGKALYLISGHWSNRSAQEARNFCEVDQLNILTQDEAGVFSVNQTDFSDIAEQYDYVHYCPNETISGVEIPDIPIVGKAVLVADMSSNILSRNIDISKFGLIYAGAQKNLGPAGITIVIIRQDLIGNAQRATPSIWNYATQVNADSMINTPPTFAWYLCSLVFKHLRAAGGLASVEQRNQQKAALLYQYLDNSHFYHNYVAPQNRSLMNVTFTTNNDELNAKFVAEAAENGLHALKGHKVVGGMRASIYNAMPLDGVEALIEFMQKFAQENR.

Arginine 42 provides a ligand contact to L-glutamate. Tryptophan 102, threonine 154, aspartate 174, and glutamine 197 together coordinate pyridoxal 5'-phosphate. At lysine 198 the chain carries N6-(pyridoxal phosphate)lysine. 239–240 is a binding site for pyridoxal 5'-phosphate; it reads NT.

It belongs to the class-V pyridoxal-phosphate-dependent aminotransferase family. SerC subfamily. Homodimer. It depends on pyridoxal 5'-phosphate as a cofactor.

The protein localises to the cytoplasm. The catalysed reaction is O-phospho-L-serine + 2-oxoglutarate = 3-phosphooxypyruvate + L-glutamate. It catalyses the reaction 4-(phosphooxy)-L-threonine + 2-oxoglutarate = (R)-3-hydroxy-2-oxo-4-phosphooxybutanoate + L-glutamate. It participates in amino-acid biosynthesis; L-serine biosynthesis; L-serine from 3-phospho-D-glycerate: step 2/3. Its pathway is cofactor biosynthesis; pyridoxine 5'-phosphate biosynthesis; pyridoxine 5'-phosphate from D-erythrose 4-phosphate: step 3/5. Functionally, catalyzes the reversible conversion of 3-phosphohydroxypyruvate to phosphoserine and of 3-hydroxy-2-oxo-4-phosphonooxybutanoate to phosphohydroxythreonine. The sequence is that of Phosphoserine aminotransferase from Haemophilus ducreyi (strain 35000HP / ATCC 700724).